Reading from the N-terminus, the 532-residue chain is MPELSLLSALDAARIQWYHFKAIIVAGMGLFTDAYDLFCIAPIMKMISQIYYHKDSIGTALLSTSYAIALLGTALGQLIFGYLGDRVGRRKVYGLSLLIMVFSSFGCGFSVCTTRRSCVMVSLGFFRFVLGLGIGGDYPLSATIMSEFANKRTRGAFIAAVFSMQGLGILMSSAVTMVVCLAFKNAGEGSSEKTNVAGLETLAPPESDIAWRLILMIGALPAALTFYWRMLMPETARYTALVENNVVQAAKDMQRVMSVSMISQITEDSSSELEQPPSSSSYKLFSRRFLSLHGRDLFAASANWFLVDVVFYTSNLLLSQIFNFSNKPLNSTNVYDSAFEVAKLAAIVAACSTIPGYWFTVYFIDKIGRVKIQMMGFFLMAVVYLVAGIPYSWYWSKHEKTNKGFMVLYGLIFFFSNFGPNTTTFIIPAELFPARFRSTCHGISGAAGKFGAIVGTVGFLWATRHHEEDGFPDVKRVRIAFLILGGVCIAGMIVTYLFTRETMGRSLEENEDEIVSTSAGSSPANELLRRQY.

Topologically, residues 1 to 22 (MPELSLLSALDAARIQWYHFKA) are cytoplasmic. The chain crosses the membrane as a helical span at residues 23-43 (IIVAGMGLFTDAYDLFCIAPI). Topologically, residues 44-62 (MKMISQIYYHKDSIGTALL) are extracellular. The helical transmembrane segment at 63 to 83 (STSYAIALLGTALGQLIFGYL) threads the bilayer. At 84–91 (GDRVGRRK) the chain is on the cytoplasmic side. Residues 92–112 (VYGLSLLIMVFSSFGCGFSVC) traverse the membrane as a helical segment. Topologically, residues 113–124 (TTRRSCVMVSLG) are extracellular. A helical transmembrane segment spans residues 125-145 (FFRFVLGLGIGGDYPLSATIM). Topologically, residues 146–154 (SEFANKRTR) are cytoplasmic. The chain crosses the membrane as a helical span at residues 155–175 (GAFIAAVFSMQGLGILMSSAV). Over 176 to 207 (TMVVCLAFKNAGEGSSEKTNVAGLETLAPPES) the chain is Extracellular. A helical membrane pass occupies residues 208–228 (DIAWRLILMIGALPAALTFYW). At 229–292 (RMLMPETARY…KLFSRRFLSL (64 aa)) the chain is on the cytoplasmic side. The helical transmembrane segment at 293–313 (HGRDLFAASANWFLVDVVFYT) threads the bilayer. At 314-343 (SNLLLSQIFNFSNKPLNSTNVYDSAFEVAK) the chain is on the extracellular side. Residues 344-364 (LAAIVAACSTIPGYWFTVYFI) form a helical membrane-spanning segment. The Cytoplasmic portion of the chain corresponds to 365–371 (DKIGRVK). Residues 372–392 (IQMMGFFLMAVVYLVAGIPYS) form a helical membrane-spanning segment. Over 393-406 (WYWSKHEKTNKGFM) the chain is Extracellular. A helical transmembrane segment spans residues 407–427 (VLYGLIFFFSNFGPNTTTFII). Residues 428–441 (PAELFPARFRSTCH) lie on the Cytoplasmic side of the membrane. A helical membrane pass occupies residues 442-462 (GISGAAGKFGAIVGTVGFLWA). Residues 463–478 (TRHHEEDGFPDVKRVR) lie on the Extracellular side of the membrane. The chain crosses the membrane as a helical span at residues 479–499 (IAFLILGGVCIAGMIVTYLFT). At 500–532 (RETMGRSLEENEDEIVSTSAGSSPANELLRRQY) the chain is on the cytoplasmic side. Residues 509 to 532 (ENEDEIVSTSAGSSPANELLRRQY) form a disordered region. Residues 515–524 (VSTSAGSSPA) show a composition bias toward polar residues.

It belongs to the major facilitator superfamily. Phosphate:H(+) symporter (TC 2.A.1.9) family.

The protein resides in the membrane. High-affinity transporter for external inorganic phosphate. The chain is Probable inorganic phosphate transporter 1-9 (PHT1-9) from Arabidopsis thaliana (Mouse-ear cress).